Here is a 451-residue protein sequence, read N- to C-terminus: D-aminoacyl-tRNA deacylase (451 aa).

Positions 410–437 (RTADIPEGPKFGKLASGESVEIDGEEID) are disordered.

The protein belongs to the DtdA deacylase family. As to quaternary structure, monomer. Zn(2+) serves as cofactor.

It carries out the reaction a D-aminoacyl-tRNA + H2O = a tRNA + a D-alpha-amino acid + H(+). The enzyme catalyses glycyl-tRNA(Ala) + H2O = tRNA(Ala) + glycine + H(+). D-aminoacyl-tRNA deacylase with broad substrate specificity. By recycling D-aminoacyl-tRNA to D-amino acids and free tRNA molecules, this enzyme counteracts the toxicity associated with the formation of D-aminoacyl-tRNA entities in vivo. This Haloarcula marismortui (strain ATCC 43049 / DSM 3752 / JCM 8966 / VKM B-1809) (Halobacterium marismortui) protein is D-aminoacyl-tRNA deacylase.